The primary structure comprises 547 residues: MFS-type transporter ltbE (547 aa).

The segment at methionine 1–serine 23 is disordered. The next 13 helical transmembrane spans lie at glutamine 33–isoleucine 53, aspartate 74–glycine 94, tryptophan 104–proline 124, isoleucine 135–valine 155, proline 165–isoleucine 185, phenylalanine 195–leucine 215, alanine 240–valine 260, lysine 267–tryptophan 287, glycine 310–phenylalanine 330, isoleucine 343–alanine 363, valine 370–valine 390, tryptophan 399–leucine 419, and threonine 432–glycine 452. N-linked (GlcNAc...) asparagine glycosylation is present at asparagine 463. The chain crosses the membrane as a helical span at residues valine 506 to tryptophan 526.

The protein belongs to the major facilitator superfamily. TCR/Tet family.

It is found in the cell membrane. In terms of biological role, MFS-type transporter; part of the gene cluster that mediates the biosynthesis of luteodienoside A, a glycosylated polyketide consisting of an unusual 1-O-beta-D-glucopyranosyl-myo-inositol (glucinol) ester of 3-hydroxy-2,2,4-trimethylocta-4,6-dienoic acid. LtbE is probably involved in the secretion of luteodienoside A. The protein is MFS-type transporter ltbE of Aspergillus luteorubrus.